The following is a 463-amino-acid chain: A-type ATP synthase subunit B (463 aa).

Belongs to the ATPase alpha/beta chains family. As to quaternary structure, has multiple subunits with at least A(3), B(3), C, D, E, F, H, I and proteolipid K(x).

The protein resides in the cell membrane. Functionally, component of the A-type ATP synthase that produces ATP from ADP in the presence of a proton gradient across the membrane. The B chain is a regulatory subunit. The polypeptide is A-type ATP synthase subunit B (Methanothrix thermoacetophila (strain DSM 6194 / JCM 14653 / NBRC 101360 / PT) (Methanosaeta thermophila)).